A 1023-amino-acid polypeptide reads, in one-letter code: Phosphoenolpyruvate carboxylase (1023 aa).

Residues His199 and Lys669 contribute to the active site.

This sequence belongs to the PEPCase type 1 family. It depends on Mg(2+) as a cofactor.

The catalysed reaction is oxaloacetate + phosphate = phosphoenolpyruvate + hydrogencarbonate. Its function is as follows. Forms oxaloacetate, a four-carbon dicarboxylic acid source for the tricarboxylic acid cycle. The chain is Phosphoenolpyruvate carboxylase from Trichormus variabilis (strain ATCC 29413 / PCC 7937) (Anabaena variabilis).